The following is a 477-amino-acid chain: Cysteine--tRNA ligase (477 aa).

A Zn(2+)-binding site is contributed by C28. Residues 30–40 (PTVYDYAHIGN) carry the 'HIGH' region motif. C213, H238, and E242 together coordinate Zn(2+). The 'KMSKS' region signature appears at 270–274 (KMSKS). K273 serves as a coordination point for ATP.

It belongs to the class-I aminoacyl-tRNA synthetase family. As to quaternary structure, monomer. Requires Zn(2+) as cofactor.

Its subcellular location is the cytoplasm. It catalyses the reaction tRNA(Cys) + L-cysteine + ATP = L-cysteinyl-tRNA(Cys) + AMP + diphosphate. In Chlamydia trachomatis serovar A (strain ATCC VR-571B / DSM 19440 / HAR-13), this protein is Cysteine--tRNA ligase.